We begin with the raw amino-acid sequence, 143 residues long: Nucleoside diphosphate kinase (143 aa).

ATP contacts are provided by K11, F59, R87, T93, R104, and N114. The active-site Pros-phosphohistidine intermediate is H117.

Belongs to the NDK family. As to quaternary structure, homotetramer. It depends on Mg(2+) as a cofactor.

The protein localises to the cytoplasm. It catalyses the reaction a 2'-deoxyribonucleoside 5'-diphosphate + ATP = a 2'-deoxyribonucleoside 5'-triphosphate + ADP. The catalysed reaction is a ribonucleoside 5'-diphosphate + ATP = a ribonucleoside 5'-triphosphate + ADP. Its function is as follows. Major role in the synthesis of nucleoside triphosphates other than ATP. The ATP gamma phosphate is transferred to the NDP beta phosphate via a ping-pong mechanism, using a phosphorylated active-site intermediate. This is Nucleoside diphosphate kinase from Enterobacter sp. (strain 638).